Consider the following 605-residue polypeptide: MCGIVGVVGSKNATDILMQGLEKLEYRGYDSAGIFVNGQETAAKLVKSVGRIADLRGKLGIDVSGTAGIGHTRWATHGKPTEDNAHPHTSTSGRFILVHNGVIENFVELKNEFLMNDTFKGQTDTEIAVHLIAKFAEEEGLSTLEAFKKALSLIQGSYAFALMDSEDAEVIYVAKNKSPLLIGLGEGYNMVCSDAMAMIRETSEFMEIHDKELVVLTKDNVTVMDYEGNVLSRESYTAELDLSDIGKGTYPFYMLKEIDEQPAVMRKLIATYANEDGTMKVDQDIIKGIQEADRIYIIAAGTSYHAGFGAKMMLESLTNTPVELGLASEWGYDMPLLSQKPFFIFLSQSGETADSRQVLVKVNELGLPSLTVTNVPGSTLSREATYTMLIGAGPEIAVASTKAYTGQIATLAFLAKAVGEAEGEVKAKEFDLVKELSLVAQSIEATLSEKDEIAAIVADLLPTTRNAFYIGRKQDYYVAMEASLKLKEISYIQCEGFAAGELKHGTISLIEKGTPVLALISNNEEVAAHTRGNVMETVARGASAITIVEEGVAREDDTIVVNQVHPYLSAISMVIPTQLIAYYASMQRGLDVDKPRNLAKAVTVE.

Cysteine 2 (nucleophile; for GATase activity) is an active-site residue. Residues 2–219 enclose the Glutamine amidotransferase type-2 domain; that stretch reads CGIVGVVGSK…DKELVVLTKD (218 aa). 2 SIS domains span residues 285–424 and 457–595; these read IIKG…AEGE and VADL…VDKP. The For Fru-6P isomerization activity role is filled by lysine 600.

Homodimer.

It localises to the cytoplasm. It carries out the reaction D-fructose 6-phosphate + L-glutamine = D-glucosamine 6-phosphate + L-glutamate. Functionally, catalyzes the first step in hexosamine metabolism, converting fructose-6P into glucosamine-6P using glutamine as a nitrogen source. In Lactococcus lactis subsp. lactis (strain IL1403) (Streptococcus lactis), this protein is Glutamine--fructose-6-phosphate aminotransferase [isomerizing].